A 351-amino-acid polypeptide reads, in one-letter code: MDYESIKKILFHFDPETAHHIAESAFELASFFPFILNRLQEKFLVKDPMLSQELFGKTFCNPLGIAAGFDKNATMTKTLHALGFGYVEIGTVTPKPQSGNPKPRLFRYIKQEAIQNAMGFNNDGAEVIKARLQRITPASFPIGVNIGKNKTTPDEQALQDYRFLIKTFHSLSDYLVINISSPNTPGLRDLQNESFIKELFSMAKELTNTPVLLKIAPDMSEDQAVSLCSTAVDAGAAGVIATNTSIDYSLLRGAKDFGGVSGKVIKEKSFAIFKAVAKELFGKTVLISVGGIDSAEEAYRRIRHGATLLQIYTSFIYGGPGLVKSINEGLIEYLKKDGFTHISEAIGIDIR.

FMN contacts are provided by residues 67 to 71 (AGFDK) and threonine 91. Lysine 71 provides a ligand contact to substrate. 116-120 (NAMGF) provides a ligand contact to substrate. Residues asparagine 145 and asparagine 178 each coordinate FMN. Asparagine 178 provides a ligand contact to substrate. The active-site Nucleophile is the serine 181. Asparagine 183 lines the substrate pocket. Positions 214 and 242 each coordinate FMN. Residue 243 to 244 (NT) participates in substrate binding. Residues glycine 262, glycine 291, and 312–313 (YT) contribute to the FMN site.

It belongs to the dihydroorotate dehydrogenase family. Type 2 subfamily. As to quaternary structure, monomer. Requires FMN as cofactor.

It is found in the cell membrane. It carries out the reaction (S)-dihydroorotate + a quinone = orotate + a quinol. The protein operates within pyrimidine metabolism; UMP biosynthesis via de novo pathway; orotate from (S)-dihydroorotate (quinone route): step 1/1. Catalyzes the conversion of dihydroorotate to orotate with quinone as electron acceptor. The polypeptide is Dihydroorotate dehydrogenase (quinone) (Nitratiruptor sp. (strain SB155-2)).